Consider the following 289-residue polypeptide: T-cell ecto-ADP-ribosyltransferase 2 (289 aa).

The signal sequence occupies residues 1–20 (MTSKIFKFFLTWWLTQQVTG). Intrachain disulfides connect Cys41-Cys246 and Cys141-Cys193. In terms of domain architecture, TR mART core spans 61–241 (EELKLEWEKA…IFLDSPERKK (181 aa)). The N-linked (GlcNAc...) asparagine glycan is linked to Asn79. Residues Tyr98, Arg146, and Gln164 each coordinate NAD(+). Residue Arg146 is part of the active site. Residue Ser167 is part of the active site. Residue Ser202 participates in NAD(+) binding. Glu209 is a catalytic residue. N-linked (GlcNAc...) asparagine glycosylation is present at Asn249. Ser260 carries GPI-anchor amidated serine lipidation. Positions 261 to 289 (ISGSRESCVSLFLVVLLGLLVQQLTLAEL) are cleaved as a propeptide — removed in mature form.

Belongs to the Arg-specific ADP-ribosyltransferase family. As to expression, expressed in spleen, intestine and thymus.

It is found in the cell membrane. It catalyses the reaction L-arginyl-[protein] + NAD(+) = N(omega)-(ADP-D-ribosyl)-L-arginyl-[protein] + nicotinamide + H(+). The enzyme catalyses NAD(+) + H2O = ADP-D-ribose + nicotinamide + H(+). Has both NAD(+) glycohydrolase and ADP-ribosyltransferase activity. This Mus musculus (Mouse) protein is T-cell ecto-ADP-ribosyltransferase 2 (Art2b).